The primary structure comprises 494 residues: Uric acid degradation bifunctional protein PucL (494 aa).

Positions 1–174 (MFTMDDLNQM…EKGETQMKRT (174 aa)) are OHCU decarboxylase. The active-site Proton donor; for OHCU decarboxylase activity is His-68. 5-hydroxy-2-oxo-4-ureido-2,5-dihydro-1H-imidazole-5-carboxylate is bound by residues Pro-69, 81 to 85 (SVREQ), and 116 to 120 (FILAV). Residues 175–494 (MSYGKGNVFA…AAEKCRSLKA (320 aa)) form a urate oxidase region. Lys-179 serves as the catalytic Charge relay system; for urate oxidase activity. Lys-190 acts as the Charge relay system in catalysis. Thr-239 (charge relay system; for urate oxidase activity) is an active-site residue. Thr-239, Asp-240, Phe-349, Arg-366, Ile-414, Gln-415, and Asn-441 together coordinate urate.

In the N-terminal section; belongs to the OHCU decarboxylase family. It in the C-terminal section; belongs to the uricase family.

The catalysed reaction is 5-hydroxy-2-oxo-4-ureido-2,5-dihydro-1H-imidazole-5-carboxylate + H(+) = (S)-allantoin + CO2. It catalyses the reaction urate + O2 + H2O = 5-hydroxyisourate + H2O2. It participates in purine metabolism; urate degradation; (S)-allantoin from urate: step 1/3. It functions in the pathway purine metabolism; urate degradation; (S)-allantoin from urate: step 3/3. Catalyzes two steps in the degradation of uric acid, i.e. the oxidation of uric acid to 5-hydroxyisourate (HIU) and the stereoselective decarboxylation of 2-oxo-4-hydroxy-4-carboxy-5-ureidoimidazoline (OHCU) to (S)-allantoin. The protein is Uric acid degradation bifunctional protein PucL (pucL) of Bacillus subtilis (strain 168).